The primary structure comprises 137 residues: Nucleoside diphosphate kinase (137 aa).

The ATP site is built by Lys-9, Phe-57, Arg-85, Thr-91, Arg-102, and Asn-112. The active-site Pros-phosphohistidine intermediate is His-115.

Belongs to the NDK family. As to quaternary structure, homotetramer. Requires Mg(2+) as cofactor.

It localises to the cytoplasm. The enzyme catalyses a 2'-deoxyribonucleoside 5'-diphosphate + ATP = a 2'-deoxyribonucleoside 5'-triphosphate + ADP. It carries out the reaction a ribonucleoside 5'-diphosphate + ATP = a ribonucleoside 5'-triphosphate + ADP. Major role in the synthesis of nucleoside triphosphates other than ATP. The ATP gamma phosphate is transferred to the NDP beta phosphate via a ping-pong mechanism, using a phosphorylated active-site intermediate. The sequence is that of Nucleoside diphosphate kinase from Syntrophotalea carbinolica (strain DSM 2380 / NBRC 103641 / GraBd1) (Pelobacter carbinolicus).